We begin with the raw amino-acid sequence, 287 residues long: Heterodimeric geranylgeranyl pyrophosphate synthase small subunit 2, chloroplastic (287 aa).

Residues glutamate 103 and aspartate 109 each coordinate Mg(2+). The dimethylallyl diphosphate site is built by lysine 204, glutamine 241, and lysine 250.

The protein belongs to the FPP/GGPP synthase family. As to quaternary structure, part of a heterodimeric geranyl(geranyl)diphosphate synthase. Mg(2+) serves as cofactor. Mainly expressed in trichomes, and, to a lower extent, in roots, leaves, flowers and stems.

The protein localises to the plastid. The protein resides in the chloroplast thylakoid membrane. Functionally, heterodimeric geranyl(geranyl)-diphosphate (GPP) synthase small subunit. The small subunit alone is inactive in vitro while the large subunit GGPPS1 catalyzes mainly the production of geranygeranyl-diphosphate in vitro. Upon association of the two subunits, the product profile changes and the production of gerany-diphosphate is strongly increased. This is Heterodimeric geranylgeranyl pyrophosphate synthase small subunit 2, chloroplastic from Cannabis sativa (Hemp).